The chain runs to 246 residues: Submandibular gland secretory Glx-rich protein CA (246 aa).

The signal sequence occupies residues 1–18 (MLVVLLTAALLALSSAQG). The disordered stretch occupies residues 14–223 (SSAQGTDEEV…SGRPKKPLLP (210 aa)). 7 stretches are compositionally biased toward low complexity: residues 39–50 (PVDSGSDPPSAD), 58–71 (EGES…EPPA), 81–93 (QQEP…QEPP), 104–116 (QQEP…QEPP), 127–141 (QQEP…PPAT), 150–159 (QQESTQAENQ), and 178–196 (VESP…QQTN). Tandem repeats lie at residues 67–89 (EEPP…QAEN), 90–112 (QEPP…QAEN), 113–135 (QEPP…QAED), 136–158 (QQPP…QAEN), and 159–181 (QEPS…VESP). The 5 X 23 AA tandem repeats stretch occupies residues 67–181 (EEPPATSGSE…QPEEGNVESP (115 aa)). The span at 197 to 216 (PEEKPPAPKTQEEPQHDSGR) shows a compositional bias: basic and acidic residues.

As to expression, submandibular gland acinar cells.

Its subcellular location is the secreted. Functionally, GRP proteins have a marked affinity for hydroxyapatite. They may play a role in the formation of the protective acquired pellicle at the saliva-tooth interface. This is Submandibular gland secretory Glx-rich protein CA (Grpca) from Rattus norvegicus (Rat).